We begin with the raw amino-acid sequence, 32 residues long: Ranatuerin-3 (32 aa).

Residues C23 and C28 are joined by a disulfide bond.

The protein belongs to the frog skin active peptide (FSAP) family. Ranatuerin subfamily. Expressed by the skin glands.

The protein resides in the secreted. Its function is as follows. Antibacterial activity against Gram-positive bacterium S.aureus (MIC=60 uM). Shows no detectable hemolytic activity towards human erythrocytes. The chain is Ranatuerin-3 from Aquarana catesbeiana (American bullfrog).